The following is a 372-amino-acid chain: Fatty acid conjugase FAC2 B (372 aa).

2 consecutive transmembrane segments (helical) span residues 44 to 64 (YFLF…SNYI) and 74 to 94 (IVWP…WMIG). The short motif at 95–99 (HECGH) is the Histidine box-1 element. The Histidine box-2 signature appears at 131–135 (HRNHH). The next 3 membrane-spanning stretches (helical) occupy residues 166 to 186 (IGLM…YIMF), 217 to 237 (VLFS…IVTV), and 240 to 260 (AMPA…ILFA). The short motif at 304–308 (HVIHH) is the Histidine box-3 element.

It belongs to the fatty acid desaturase type 1 family. Expressed exclusively in the developing seeds. Not detected in leaves.

It localises to the microsome membrane. It catalyses the reaction a (9Z,12Z)-octadecadienoyl-containing glycerolipid + AH2 + O2 = a (8E,10E,12Z)-octadecatrienoyl-containing glycerolipid + A + 2 H2O. It functions in the pathway lipid metabolism; polyunsaturated fatty acid biosynthesis. Fatty acid conjugase converting 18:2(9Z, 12Z) to calendic acid 18:3(8E, 10E, 12Z). Converts alpha-linolenic acid (18:3(9Z, 12Z, 15Z)) into 18:4(8E, 10E, 12Z, 15Z). Also has weak activity on the mono-unsaturates 16:1(9Z) and 18:1(9Z) producing two conjugated double bonds at delta(8) and delta(10) position. The protein is Fatty acid conjugase FAC2 B of Calendula officinalis (Pot marigold).